A 200-amino-acid polypeptide reads, in one-letter code: Protein GrpE (200 aa).

The segment covering 1-27 (MTKQEKAENQEKPTEETVEETPKKETP) has biased composition (basic and acidic residues). Residues 1–50 (MTKQEKAENQEKPTEETVEETPKKETPFEPVMEADEVEETTEAQAPVEEA) are disordered. Residues 32 to 41 (MEADEVEETT) show a composition bias toward acidic residues.

Belongs to the GrpE family. In terms of assembly, homodimer.

The protein localises to the cytoplasm. Participates actively in the response to hyperosmotic and heat shock by preventing the aggregation of stress-denatured proteins, in association with DnaK and GrpE. It is the nucleotide exchange factor for DnaK and may function as a thermosensor. Unfolded proteins bind initially to DnaJ; upon interaction with the DnaJ-bound protein, DnaK hydrolyzes its bound ATP, resulting in the formation of a stable complex. GrpE releases ADP from DnaK; ATP binding to DnaK triggers the release of the substrate protein, thus completing the reaction cycle. Several rounds of ATP-dependent interactions between DnaJ, DnaK and GrpE are required for fully efficient folding. The chain is Protein GrpE from Latilactobacillus sakei subsp. sakei (strain 23K) (Lactobacillus sakei subsp. sakei).